Consider the following 418-residue polypeptide: UDP-N-acetylglucosamine 1-carboxyvinyltransferase (418 aa).

Position 22-23 (Lys22–Asn23) interacts with phosphoenolpyruvate. Position 92 (Arg92) interacts with UDP-N-acetyl-alpha-D-glucosamine. The active-site Proton donor is Cys116. Cys116 bears the 2-(S-cysteinyl)pyruvic acid O-phosphothioketal mark. UDP-N-acetyl-alpha-D-glucosamine is bound by residues Arg121–Leu125, Asp305, and Leu327.

It belongs to the EPSP synthase family. MurA subfamily.

The protein localises to the cytoplasm. It carries out the reaction phosphoenolpyruvate + UDP-N-acetyl-alpha-D-glucosamine = UDP-N-acetyl-3-O-(1-carboxyvinyl)-alpha-D-glucosamine + phosphate. It functions in the pathway cell wall biogenesis; peptidoglycan biosynthesis. Functionally, cell wall formation. Adds enolpyruvyl to UDP-N-acetylglucosamine. This chain is UDP-N-acetylglucosamine 1-carboxyvinyltransferase, found in Campylobacter jejuni subsp. jejuni serotype O:6 (strain 81116 / NCTC 11828).